The following is a 435-amino-acid chain: MQDSLTLKPVDYIQGKINIPGSKSISNRVLLLSALSNGKTILKNLLYSDDIKYMLKALLKLGIFYKLDKKKSKCTIYGISDAFSVKNKIKLFLGNAGTAMRPLLAILSLKKNKIILTGEKRMKERPIHHLVDSLRQGGANITYKNKKKFPPLYIKGGFKGGKIFIDGSISSQFLSSLLMAAPLAELDTEIIVKNQLVSKPYINLTINLMEKFGISVSILNDYKHFYIKGNQKYISPKKYYIESDLSSATYFLAAAAIKGGSIQINGIQKKSIQGDINFIKILKQMGVSIQWKKNSVICKKNKLLGITVDCNHIPDAAMTIAILGVFSKKKVYIKNIYNWRVKETDRIYAMSTELKKIGARVITGKDYIKVYPVKNFIHAKINTYNDHRIAMCFSLISLSGTSVTLLNPKCVNKTFPSFFKNFYSICHYSNINKNI.

Residues K23, S24, and R28 each contribute to the 3-phosphoshikimate site. A phosphoenolpyruvate-binding site is contributed by K23. Phosphoenolpyruvate contacts are provided by G97 and R125. Positions 170, 171, 172, 198, 315, 338, and 342 each coordinate 3-phosphoshikimate. A phosphoenolpyruvate-binding site is contributed by Q172. D315 acts as the Proton acceptor in catalysis. Residues R346, R388, and K413 each coordinate phosphoenolpyruvate.

The protein belongs to the EPSP synthase family. In terms of assembly, monomer.

It localises to the cytoplasm. It catalyses the reaction 3-phosphoshikimate + phosphoenolpyruvate = 5-O-(1-carboxyvinyl)-3-phosphoshikimate + phosphate. The protein operates within metabolic intermediate biosynthesis; chorismate biosynthesis; chorismate from D-erythrose 4-phosphate and phosphoenolpyruvate: step 6/7. Its function is as follows. Catalyzes the transfer of the enolpyruvyl moiety of phosphoenolpyruvate (PEP) to the 5-hydroxyl of shikimate-3-phosphate (S3P) to produce enolpyruvyl shikimate-3-phosphate and inorganic phosphate. The protein is 3-phosphoshikimate 1-carboxyvinyltransferase of Buchnera aphidicola subsp. Cinara cedri (strain Cc).